We begin with the raw amino-acid sequence, 380 residues long: Cytochrome b (380 aa).

A run of 4 helical transmembrane segments spans residues 33 to 53 (FGSL…FLAM), 77 to 98 (WLIR…FLHV), 113 to 133 (WNMG…GYVL), and 178 to 198 (FFAF…VHLL). 2 residues coordinate heme: His83 and His97. Heme contacts are provided by His182 and His196. A ubiquinone is bound at residue His201. A run of 4 helical transmembrane segments spans residues 226-246 (VKDF…TLFF), 288-308 (LGGV…PLLH), 320-340 (ITQT…WIGG), and 347-367 (FIII…IFMP).

The protein belongs to the cytochrome b family. As to quaternary structure, the cytochrome bc1 complex contains 11 subunits: 3 respiratory subunits (MT-CYB, CYC1 and UQCRFS1), 2 core proteins (UQCRC1 and UQCRC2) and 6 low-molecular weight proteins (UQCRH/QCR6, UQCRB/QCR7, UQCRQ/QCR8, UQCR10/QCR9, UQCR11/QCR10 and a cleavage product of UQCRFS1). This cytochrome bc1 complex then forms a dimer. Heme serves as cofactor.

Its subcellular location is the mitochondrion inner membrane. In terms of biological role, component of the ubiquinol-cytochrome c reductase complex (complex III or cytochrome b-c1 complex) that is part of the mitochondrial respiratory chain. The b-c1 complex mediates electron transfer from ubiquinol to cytochrome c. Contributes to the generation of a proton gradient across the mitochondrial membrane that is then used for ATP synthesis. The polypeptide is Cytochrome b (MT-CYB) (Microtus arvalis (Common vole)).